Here is a 139-residue protein sequence, read N- to C-terminus: Small ribosomal subunit protein bS6 (139 aa).

Over residues 114 to 133 (KKEPREPRAPREPRVEKVDE) the composition is skewed to basic and acidic residues. The segment at 114-139 (KKEPREPRAPREPRVEKVDEQTFTEE) is disordered.

Belongs to the bacterial ribosomal protein bS6 family.

Functionally, binds together with bS18 to 16S ribosomal RNA. This is Small ribosomal subunit protein bS6 from Campylobacter concisus (strain 13826).